The sequence spans 84 residues: Large ribosomal subunit protein bL27 (84 aa).

The interval Met-1–Lys-24 is disordered.

Belongs to the bacterial ribosomal protein bL27 family.

The chain is Large ribosomal subunit protein bL27 from Pelobacter propionicus (strain DSM 2379 / NBRC 103807 / OttBd1).